The sequence spans 251 residues: uncharacterized protein (251 aa).

2 disordered regions span residues 1–92 (MGRP…PGSA) and 137–251 (KPTP…LRTH). Positions 69–92 (AEGAPALLGGSPSSGSPGHPPGSA) are enriched in low complexity. Positions 155–172 (SESSWQLPQLPAGSTSGS) are enriched in polar residues.

This is an uncharacterized protein from Homo sapiens (Human).